Consider the following 367-residue polypeptide: Flagellar P-ring protein (367 aa).

The first 22 residues, 1 to 22, serve as a signal peptide directing secretion; that stretch reads MRRMLVIRWILAIHLIATQVFA.

Belongs to the FlgI family. In terms of assembly, the basal body constitutes a major portion of the flagellar organelle and consists of four rings (L,P,S, and M) mounted on a central rod.

Its subcellular location is the periplasm. The protein localises to the bacterial flagellum basal body. Functionally, assembles around the rod to form the L-ring and probably protects the motor/basal body from shearing forces during rotation. This is Flagellar P-ring protein from Legionella pneumophila (strain Corby).